The following is a 307-amino-acid chain: Homoserine O-acetyltransferase (307 aa).

The active-site Acyl-thioester intermediate is the Cys-142. Residues Lys-163 and Ser-192 each coordinate substrate. His-235 serves as the catalytic Proton acceptor. Residue Glu-237 is part of the active site. Arg-249 serves as a coordination point for substrate.

The protein belongs to the MetA family.

Its subcellular location is the cytoplasm. The enzyme catalyses L-homoserine + acetyl-CoA = O-acetyl-L-homoserine + CoA. It functions in the pathway amino-acid biosynthesis; L-methionine biosynthesis via de novo pathway; O-acetyl-L-homoserine from L-homoserine: step 1/1. Functionally, transfers an acetyl group from acetyl-CoA to L-homoserine, forming acetyl-L-homoserine. This is Homoserine O-acetyltransferase from Sinorhizobium fredii (strain NBRC 101917 / NGR234).